The sequence spans 279 residues: Toxin TxP-I (279 aa).

An N-terminal signal peptide occupies residues 1–14 (MNLFFLFIIPTILA). A propeptide spanning residues 15–27 (VKPFRSFNNISLI) is cleaved from the precursor.

Post-translationally, contains several disulfide bonds. As to expression, posterior glands which appear to be connected with the stylet through a series of ducts.

It is found in the secreted. Functionally, part of a complex mixture of neurotoxins which P.tritici utilizes to capture prey. It has contracting-paralyzing activity in insects. The polypeptide is Toxin TxP-I (Pyemotes tritici (Straw itch mite)).